Here is a 124-residue protein sequence, read N- to C-terminus: Large ribosomal subunit protein bL12 (124 aa).

Belongs to the bacterial ribosomal protein bL12 family. As to quaternary structure, homodimer. Part of the ribosomal stalk of the 50S ribosomal subunit. Forms a multimeric L10(L12)X complex, where L10 forms an elongated spine to which 2 to 4 L12 dimers bind in a sequential fashion. Binds GTP-bound translation factors.

Functionally, forms part of the ribosomal stalk which helps the ribosome interact with GTP-bound translation factors. Is thus essential for accurate translation. This Nitrosomonas europaea (strain ATCC 19718 / CIP 103999 / KCTC 2705 / NBRC 14298) protein is Large ribosomal subunit protein bL12.